We begin with the raw amino-acid sequence, 346 residues long: Haptoglobin-related protein (346 aa).

Positions 1–16 form a signal peptide, not cleaved; the sequence is DLGAVIYLLLWGRQLF. One can recognise a Sushi domain in the interval 32–85; the sequence is FPKPPEIANGYVEHLFRYQRKNYYRLRTEGDGVYTLNDKKQWINKAVGDKLPEC. The 243-residue stretch at 102–344 folds into the Peptidase S1 domain; that stretch reads ILGGHLDAKG…IHVWVQKTIA (243 aa). Cystine bridges form between cysteine 249–cysteine 280 and cysteine 291–cysteine 321.

It belongs to the peptidase S1 family.

Its subcellular location is the secreted. Its function is as follows. Primate-specific plasma protein associated with apolipoprotein L-I (apoL-I)-containing high-density lipoprotein (HDL). Binds hemoglobin with high affinity and may contribute to the clearance of cell-free hemoglobin to allow hepatic recycling of heme iron. The polypeptide is Haptoglobin-related protein (HPR) (Pan troglodytes (Chimpanzee)).